We begin with the raw amino-acid sequence, 117 residues long: Immunoglobulin heavy variable 1-69-2 (117 aa).

Positions 1–19 (MDCTWRILLLVAAATGTHA) are cleaved as a signal peptide. The tract at residues 20–44 (EVQLVQSGAEVKKPGATVKISCKVS) is framework-1. In terms of domain architecture, Ig-like spans 20–117 (EVQLVQSGAE…EDTAVYYCAT (98 aa)). Cys41 and Cys115 form a disulfide bridge. The interval 45-52 (GYTFTDYY) is complementarity-determining-1. Positions 53–69 (MHWVQQAPGKGLEWMGL) are framework-2. The complementarity-determining-2 stretch occupies residues 70-77 (VDPEDGET). Positions 78–115 (IYAEKFQGRVTITADTSTDTAYMELSSLRSEDTAVYYC) are framework-3. The interval 116–117 (AT) is complementarity-determining-3.

In terms of assembly, immunoglobulins are composed of two identical heavy chains and two identical light chains; disulfide-linked.

It is found in the secreted. The protein localises to the cell membrane. Its function is as follows. V region of the variable domain of immunoglobulin heavy chains that participates in the antigen recognition. Immunoglobulins, also known as antibodies, are membrane-bound or secreted glycoproteins produced by B lymphocytes. In the recognition phase of humoral immunity, the membrane-bound immunoglobulins serve as receptors which, upon binding of a specific antigen, trigger the clonal expansion and differentiation of B lymphocytes into immunoglobulins-secreting plasma cells. Secreted immunoglobulins mediate the effector phase of humoral immunity, which results in the elimination of bound antigens. The antigen binding site is formed by the variable domain of one heavy chain, together with that of its associated light chain. Thus, each immunoglobulin has two antigen binding sites with remarkable affinity for a particular antigen. The variable domains are assembled by a process called V-(D)-J rearrangement and can then be subjected to somatic hypermutations which, after exposure to antigen and selection, allow affinity maturation for a particular antigen. In Homo sapiens (Human), this protein is Immunoglobulin heavy variable 1-69-2.